The sequence spans 459 residues: Elongation factor 1-alpha (459 aa).

N,N,N-trimethylglycine is present on G2. At K3 the chain carries N6,N6-dimethyllysine; alternate. K3 bears the N6-methyllysine; alternate mark. One can recognise a tr-type G domain in the interval 5 to 240 (KTHVNVVVIG…DAVDPPTRPS (236 aa)). The tract at residues 14–21 (GHVDSGKS) is G1. 14-21 (GHVDSGKS) serves as a coordination point for GTP. Position 30 is an N6-methyllysine (K30). A G2 region spans residues 70 to 74 (VITID). An N6,N6,N6-trimethyllysine modification is found at K79. The interval 91–94 (DAPG) is G3. GTP contacts are provided by residues 91–95 (DAPGH) and 153–156 (NKMD). The tract at residues 153–156 (NKMD) is G4. The tract at residues 192-194 (SGW) is G5. At K316 the chain carries N6,N6-dimethyllysine; alternate. At K316 the chain carries N6-methyllysine; alternate. N6-methyllysine is present on K390.

This sequence belongs to the TRAFAC class translation factor GTPase superfamily. Classic translation factor GTPase family. EF-Tu/EF-1A subfamily.

It is found in the cytoplasm. Its function is as follows. This protein promotes the GTP-dependent binding of aminoacyl-tRNA to the A-site of ribosomes during protein biosynthesis. The polypeptide is Elongation factor 1-alpha (TEF) (Blastobotrys adeninivorans (Yeast)).